The chain runs to 529 residues: Membrane-bound lytic murein transglycosylase F (529 aa).

Positions 1 to 27 (MPIFNLHQLRNFLFIIATTLFLSACQI) are cleaved as a signal peptide. Positions 28-287 (ESKPTSELDQ…RLEEKYIGHI (260 aa)) are non-LT domain. The interval 288–529 (GSFDYVDTRA…QATLTTEVQP (242 aa)) is LT domain. Glu-332 is an active-site residue. A disordered region spans residues 510–529 (EALSPDVGVSQATLTTEVQP). Residues 519 to 529 (SQATLTTEVQP) show a composition bias toward polar residues.

In the N-terminal section; belongs to the bacterial solute-binding protein 3 family. The protein in the C-terminal section; belongs to the transglycosylase Slt family.

It localises to the cell outer membrane. It catalyses the reaction Exolytic cleavage of the (1-&gt;4)-beta-glycosidic linkage between N-acetylmuramic acid (MurNAc) and N-acetylglucosamine (GlcNAc) residues in peptidoglycan, from either the reducing or the non-reducing ends of the peptidoglycan chains, with concomitant formation of a 1,6-anhydrobond in the MurNAc residue.. Murein-degrading enzyme that degrades murein glycan strands and insoluble, high-molecular weight murein sacculi, with the concomitant formation of a 1,6-anhydromuramoyl product. Lytic transglycosylases (LTs) play an integral role in the metabolism of the peptidoglycan (PG) sacculus. Their lytic action creates space within the PG sacculus to allow for its expansion as well as for the insertion of various structures such as secretion systems and flagella. This is Membrane-bound lytic murein transglycosylase F from Vibrio vulnificus (strain CMCP6).